A 339-amino-acid chain; its full sequence is Anthranilate phosphoribosyltransferase (339 aa).

Residues glycine 79, 82–83, serine 87, 89–92, 107–115, and serine 119 each bind 5-phospho-alpha-D-ribose 1-diphosphate; these read GD, NIST, and KHGNRSVSS. An anthranilate-binding site is contributed by glycine 79. Serine 91 provides a ligand contact to Mg(2+). An anthranilate-binding site is contributed by asparagine 110. Residue arginine 165 coordinates anthranilate. 2 residues coordinate Mg(2+): aspartate 224 and glutamate 225.

The protein belongs to the anthranilate phosphoribosyltransferase family. In terms of assembly, homodimer. Mg(2+) is required as a cofactor.

The catalysed reaction is N-(5-phospho-beta-D-ribosyl)anthranilate + diphosphate = 5-phospho-alpha-D-ribose 1-diphosphate + anthranilate. The protein operates within amino-acid biosynthesis; L-tryptophan biosynthesis; L-tryptophan from chorismate: step 2/5. Its function is as follows. Catalyzes the transfer of the phosphoribosyl group of 5-phosphorylribose-1-pyrophosphate (PRPP) to anthranilate to yield N-(5'-phosphoribosyl)-anthranilate (PRA). This is Anthranilate phosphoribosyltransferase from Exiguobacterium sibiricum (strain DSM 17290 / CCUG 55495 / CIP 109462 / JCM 13490 / 255-15).